The chain runs to 403 residues: MATTISNLPRELIEEILSRVPLRAMKAMRLTCKSWNNLSKSESFMKMHIGKAATREEKTMMVAVMPHTLALVSVVVDGVNPSTELKGQFSFLDKEFFIYRVIHYEGLLLCILKDATRIVVWNPYLGQERWIQIRYSHRPHGVDHFKYAVGYADKVSCRSVKLLRFLDYFHKASDKPFFWYEIYDFDSCLWTTLDITPHWGISWTYPRVSLKGNTYWPAREMNTKGFQDHIICFDFTSERFGPLLPLPRAQGCHVSLSCVKEEKLAVLLKHRLHHDSYEYEFEIWITTKIDVEMVSWSKFLRMDMRPKIKLPLSFYVDEEKKVFMGFDHGEYPKLFLNIIGETGFLRKLDLGVHEGHRSPCSYVPSLVQIKHPAGDKMIKQSSLEDRRFAQNSLRLAAIEKLIN.

One can recognise an F-box domain in the interval 2–47 (ATTISNLPRELIEEILSRVPLRAMKAMRLTCKSWNNLSKSESFMKM).

The polypeptide is Putative F-box protein At5g41500 (Arabidopsis thaliana (Mouse-ear cress)).